The chain runs to 225 residues: Proteasome activator 28 (225 aa).

Belongs to the PA28 family. As to quaternary structure, homoheptamer. The homoheptamer associates with the 20S proteasome.

The protein resides in the nucleus. Its function is as follows. Subunit of the 11S REG (also called PA28) proteasome regulator, a doughnut-shaped homoheptamer which associates with the proteasome. 11S REG-gamma activates preferentially the trypsin-like catalytic subunit of the proteasome. May also be involved in cell cycle regulation. The protein is Proteasome activator 28 (psmE3) of Dictyostelium discoideum (Social amoeba).